The chain runs to 1003 residues: Anoctamin-2 (1003 aa).

A disordered region spans residues methionine 1–serine 68. At methionine 1–alanine 365 the chain is on the cytoplasmic side. Residues proline 10 to proline 21 show a composition bias toward low complexity. The helical transmembrane segment at tryptophan 366–leucine 386 threads the bilayer. Over tyrosine 387–histidine 434 the chain is Extracellular. A glycan (N-linked (GlcNAc...) asparagine) is linked at asparagine 422. The chain crosses the membrane as a helical span at residues leucine 435–phenylalanine 455. At leucine 456 to asparagine 538 the chain is on the cytoplasmic side. Residues phenylalanine 539 to tyrosine 559 form a helical membrane-spanning segment. Topologically, residues arginine 560 to threonine 582 are extracellular. A helical membrane pass occupies residues alanine 583–valine 603. Topologically, residues alanine 604–leucine 623 are cytoplasmic. A helical membrane pass occupies residues isoleucine 624–phenylalanine 644. Residues phenylalanine 645 to glutamate 748 are Extracellular-facing. Residues methionine 749–phenylalanine 769 form a helical membrane-spanning segment. Topologically, residues alanine 770–glycine 801 are cytoplasmic. Residues isoleucine 802–isoleucine 822 form a helical membrane-spanning segment. Residues alanine 823 to leucine 907 are Extracellular-facing. N-linked (GlcNAc...) asparagine glycosylation is found at asparagine 841, asparagine 849, and asparagine 856. Residues alanine 908–isoleucine 928 traverse the membrane as a helical segment. Residues proline 929–valine 1003 lie on the Cytoplasmic side of the membrane. Positions methionine 961–valine 1003 are disordered. A compositionally biased stretch (low complexity) spans arginine 978–valine 1003. The DLG4 binding (PDZ) motif lies at threonine 1001–valine 1003.

This sequence belongs to the anoctamin family. In terms of assembly, homodimer. Component of a presynaptic protein complex recruited to specialized plasma membrane domains of photoreceptors. Interacts with DLG4 by its C-terminal region. In terms of tissue distribution, retina, especially in the photoreceptor synaptic terminals.

Its subcellular location is the cell membrane. The catalysed reaction is chloride(in) = chloride(out). Channel activity is repressed by chloride inhibitors; strongly by niflumic acid (NFA), partially by flufenamic acid (FFA), and only slightly by meclofenamic acid (MFA), 5-Nitro-2-(3-phenylpropylamino)benzoic acid (NPPB), 4-acetamido-4'-isothiocyanato-stilben-2,2'-disulfonate (SITS), and 4,4'-diisothiocyanatostilbene-2,2'-disulfonic acid (DIDS). Its function is as follows. Calcium-activated chloride channel (CaCC) which may play a role in olfactory signal transduction. Odorant molecules bind to odor-sensing receptors (OSRs), leading to an increase in calcium entry that activates CaCC current which amplifies the depolarization of the OSR cells, ANO2 seems to be the underlying chloride channel involved in this process. May mediate light perception amplification in retina. This Homo sapiens (Human) protein is Anoctamin-2 (ANO2).